Reading from the N-terminus, the 256-residue chain is Thiazole synthase (256 aa).

The Schiff-base intermediate with DXP role is filled by lysine 95. Residues glycine 156, alanine 182–glycine 183, and asparagine 204–threonine 205 contribute to the 1-deoxy-D-xylulose 5-phosphate site.

The protein belongs to the ThiG family. As to quaternary structure, homotetramer. Forms heterodimers with either ThiH or ThiS.

The protein localises to the cytoplasm. The catalysed reaction is [ThiS sulfur-carrier protein]-C-terminal-Gly-aminoethanethioate + 2-iminoacetate + 1-deoxy-D-xylulose 5-phosphate = [ThiS sulfur-carrier protein]-C-terminal Gly-Gly + 2-[(2R,5Z)-2-carboxy-4-methylthiazol-5(2H)-ylidene]ethyl phosphate + 2 H2O + H(+). It functions in the pathway cofactor biosynthesis; thiamine diphosphate biosynthesis. Its function is as follows. Catalyzes the rearrangement of 1-deoxy-D-xylulose 5-phosphate (DXP) to produce the thiazole phosphate moiety of thiamine. Sulfur is provided by the thiocarboxylate moiety of the carrier protein ThiS. In vitro, sulfur can be provided by H(2)S. This chain is Thiazole synthase, found in Escherichia coli O127:H6 (strain E2348/69 / EPEC).